Here is a 301-residue protein sequence, read N- to C-terminus: MPWISSHMNSSSVLDFFPHKTMAVDIAMKFYLRSPPLRRDRVECRIARKSNEPLRPCIQTTNKTLLSELSNQENKVKKRVSFADSRGLALTMVKVYSDFDDELEIPFNISELIDNIVNLTTVEKERFFLDFVQPSADYLDFRNRLQAESVCLENCMLKDKALVGTVKVKNLAFQKSVKIRMTCDSWQTYKDYDCLYVKDTYAGSDKDTFSFDVSLPEGIQSSASIEFAVCFECEGRIFWDSNKGLNYRIVRQDHRIPSDFESRHYDPVCLSVDQYGSPRCSYGIFPELQTYSGFDKLGPYY.

Positions 79–82 match the PP1-binding motif motif; sequence RVSF. A CBM21 domain is found at 142–250; it reads RNRLQAESVC…SNKGLNYRIV (109 aa).

As to quaternary structure, interacts with glycogen, PPP1CC catalytic subunit of PP1 and PYGL. Associates with glycogen particles. Forms complexes with debranching enzyme, glycogen phosphorylase, glycogen synthase and phosphorylase kinase which is necessary for its regulation of PP1 activity.

Functionally, acts as a glycogen-targeting subunit for phosphatase PP1. Facilitates interaction of the PP1 with enzymes of the glycogen metabolism and regulates its activity. Suppresses the rate at which PP1 dephosphorylates (inactivates) glycogen phosphorylase and enhances the rate at which it activates glycogen synthase and therefore limits glycogen breakdown. This is Protein phosphatase 1 regulatory subunit 3B (ppp1r3b) from Xenopus tropicalis (Western clawed frog).